We begin with the raw amino-acid sequence, 220 residues long: RPA-interacting protein B (220 aa).

Positions 1 to 45 (MEAERRHRALYKGTTPPWKETYRKRCVERLKSNRSKLLDKFRQVG) are interaction with importin beta. The tract at residues 49–165 (HGGVGGSFLV…QCGVYINTQS (117 aa)) is interaction with RPA1. An RIP-type zinc finger spans residues 138–213 (CPVCNRNYLT…ASLFMSCQEC (76 aa)).

In terms of assembly, interacts directly with the RPA1 subunit of RPA complex. Interacts with importin beta, but not with importin alpha. Forms a complex with the RPA complex and importin beta, which is dissociated by Ran-GTP.

It localises to the nucleus. Functionally, mediates the import of RPA complex into the nucleus, via its interaction with importin beta. This is RPA-interacting protein B (rpain-b) from Xenopus laevis (African clawed frog).